We begin with the raw amino-acid sequence, 900 residues long: MAAGKARVHELAKELGVTSKEVLARLSEQGEFVKSASSTVEAPVARRLRESFGGSKPAPAKGTAKSPGKGPDKSLDKALDAAIDMAAGNGKATAAPAKAADSGGAAIVSPTTPAAPEPPTAVPPSPQAPHPGMAPGARPGPVPKPGIRTPRVGNNPFSSAQPADRPIPRPPAPRPGTARPGVPRPGASPGSMPPRPGGAVGGARPPRPGAPRPGGRPGAPGAGRSDAGGGNYRGGGVGAAPGTGFRGRPGGGGGGRPGQRGGAAGAFGRPGGAPRRGRKSKRQKRQEYDSMQAPVVGGVRLPHGNGETIRLARGASLSDFADKIDANPAALVQALFNLGEMVTATQSVGDETLELLGSEMNYNVQVVSPEDEDRELLESFDLSYGEDEGGEEDLQVRPPVVTVMGHVDHGKTRLLDTIRKANVREAEAGGITQHIGAYQVAVDLDGSQRLITFIDTPGHEAFTAMRARGAKATDIAILVVAADDGVMPQTVEAINHAQAADVPIVVAVNKIDKEGADPAKIRGQLTEYGLVPEEFGGDTMFVDISAKQGTNIEALEEAVLLTADAALDLRANPDMEAQGVAIEAHLDRGRGPVATVLVQRGTLRVGDSVVAGDAYGRVRRMVDEHGEDVEVALPSRPVQVIGFTSVPGAGDNFLVVDEDRIARQIADRRSARKRNALAARSRKRISLEDLDSALKETSQLNLILKGDNAGTVEALEEALMGIQVDDEVVLRVIDRGVGGITETNVNLASASDAVIIGFNVRAEGKATELASREGVEIRYYSVIYQAIDEIEQALRGLLKPIYEENQLGRAEIRALFRSSKVGLIAGCLVTSGVMRRNAKARLLRDNIVVAENLSIASLRREKDDVTEVRDGFECGLTLGYADIKEGDVIESYELVQKERA.

2 disordered regions span residues 30-77 (GEFV…SLDK) and 89-291 (NGKA…YDSM). Over residues 89–112 (NGKATAAPAKAADSGGAAIVSPTT) the composition is skewed to low complexity. Residues 113-129 (PAAPEPPTAVPPSPQAP) show a composition bias toward pro residues. Low complexity predominate over residues 175 to 187 (PGTARPGVPRPGA). Residues 215–271 (GRPGAPGAGRSDAGGGNYRGGGVGAAPGTGFRGRPGGGGGGRPGQRGGAAGAFGRPG) are compositionally biased toward gly residues. Over residues 275–284 (RRGRKSKRQK) the composition is skewed to basic residues. Residues 396 to 567 (VRPPVVTVMG…AVLLTADAAL (172 aa)) form the tr-type G domain. Residues 405-412 (GHVDHGKT) are G1. 405–412 (GHVDHGKT) lines the GTP pocket. Positions 430 to 434 (GITQH) are G2. The interval 455–458 (DTPG) is G3. GTP-binding positions include 455–459 (DTPGH) and 509–512 (NKID). Residues 509-512 (NKID) form a G4 region. Residues 545–547 (SAK) are G5.

It belongs to the TRAFAC class translation factor GTPase superfamily. Classic translation factor GTPase family. IF-2 subfamily.

Its subcellular location is the cytoplasm. Its function is as follows. One of the essential components for the initiation of protein synthesis. Protects formylmethionyl-tRNA from spontaneous hydrolysis and promotes its binding to the 30S ribosomal subunits. Also involved in the hydrolysis of GTP during the formation of the 70S ribosomal complex. This is Translation initiation factor IF-2 from Mycobacterium bovis (strain BCG / Pasteur 1173P2).